A 491-amino-acid chain; its full sequence is Monodehydroascorbate reductase 5, chlorplastic (491 aa).

The transit peptide at 1 to 42 (MASTAAAASSQGCISWALRQRGLGGGGARAVPVLPRRRFCVS) directs the protein to the chloroplast. FAD contacts are provided by residues 61-64 (GGNA), Glu88, Arg95, Lys100, and 194-195 (RD). NAD(+) is bound by residues 217 to 223 (GGYIGME), Glu241, Arg247, and Gly306. NADP(+) is bound at residue 219–223 (YIGME). NADP(+) contacts are provided by Arg247 and Gly306. FAD is bound at residue Asp344. Residue 360–361 (EH) coordinates NAD(+). Residue 360–361 (EH) coordinates NADP(+). Residue Val362 coordinates FAD. Arg366 lines the L-ascorbate pocket. Residue Tyr391 participates in FAD binding. Tyr391 serves as a coordination point for NAD(+). Residue Tyr391 participates in NADP(+) binding. Residue Arg393 coordinates L-ascorbate.

Belongs to the FAD-dependent oxidoreductase family. The cofactor is FAD.

The protein localises to the plastid. Its subcellular location is the chloroplast. It catalyses the reaction 2 monodehydro-L-ascorbate radical + NADH + H(+) = 2 L-ascorbate + NAD(+). In terms of biological role, catalyzes the conversion of monodehydroascorbate to ascorbate, oxidizing NADH in the process. Ascorbate is a major antioxidant against reactive oxygen species (ROS) and nitric oxide (NO). The sequence is that of Monodehydroascorbate reductase 5, chlorplastic from Oryza sativa subsp. japonica (Rice).